The following is a 344-amino-acid chain: TATA box-binding protein-like 2 (344 aa).

A disordered region spans residues 78–143; the sequence is NKDRTVTGNK…SNQLSSETPN (66 aa). The segment covering 110 to 120 has biased composition (low complexity); it reads GSGLNLNSNSS. A compositionally biased stretch (polar residues) spans 134–143; that stretch reads SNQLSSETPN.

Belongs to the TBP family. Interacts with TAF3.

The protein resides in the cytoplasm. It localises to the nucleus. In terms of biological role, transcription factor required in complex with TAF3 for the differentiation of myoblasts into myocytes. The complex replaces TFIID at specific promoters at an early stage in the differentiation process. In Rattus norvegicus (Rat), this protein is TATA box-binding protein-like 2.